Reading from the N-terminus, the 440-residue chain is MFASGARVAVGVSGGADSVCLLHALVELGGLKLSVLHVDHGLRGAESRADAEFVGELAARMGLPFCLREVTLGPGNVEQEGRRARLRFFHEQLAAGNCDRVALGHTRSDQAETVLFRFLRGSGTAGLAGIRPVTAEGIVRPLIELERAEIEEYLRERQIPWREDATNAGEEFARNRIRHGLLPQLAAEWNPALVETLAHTAEFARAEEAYWAGEIDRLSAESLTAGDGCVLIRTESLKALSLAVARRLVRRAIQMAKGDLRGVDFGHVERVVELASAPTGRGRTQVPGLDVRRSFEWLRLGVPFTRKPYSLKPLVPGTTQIPGTRNGISLELIEKSETSVLPWNVYNTEMGCLDWKRLAGSLELRNWRFGDQYQPMGLTGSEKIKTLFQLQRIPVWERAQWPVLTDGESIVWTRRFGPAAGFAAGPESGVVLKLGEVTIR.

13–18 contacts ATP; that stretch reads SGGADS.

The protein belongs to the tRNA(Ile)-lysidine synthase family.

It is found in the cytoplasm. It carries out the reaction cytidine(34) in tRNA(Ile2) + L-lysine + ATP = lysidine(34) in tRNA(Ile2) + AMP + diphosphate + H(+). Functionally, ligates lysine onto the cytidine present at position 34 of the AUA codon-specific tRNA(Ile) that contains the anticodon CAU, in an ATP-dependent manner. Cytidine is converted to lysidine, thus changing the amino acid specificity of the tRNA from methionine to isoleucine. This chain is tRNA(Ile)-lysidine synthase, found in Solibacter usitatus (strain Ellin6076).